The sequence spans 327 residues: Sideroflexin-2 (327 aa).

Transmembrane regions (helical) follow at residues 99-119 (GMLI…VVLW), 143-163 (VTQL…AAIG), 175-195 (LFQR…NIPL), 228-248 (EVVV…PLIM), and 267-287 (FQTL…CALF).

The protein belongs to the sideroflexin family.

The protein resides in the mitochondrion membrane. The enzyme catalyses L-serine(in) = L-serine(out). Mitochondrial amino-acid transporter that mediates transport of serine into mitochondria. This chain is Sideroflexin-2, found in Drosophila melanogaster (Fruit fly).